The sequence spans 129 residues: Glycine cleavage system H protein (129 aa).

The 83-residue stretch at 24-106 (SYTVGITEHA…YGEGWFFRVM (83 aa)) folds into the Lipoyl-binding domain. Position 65 is an N6-lipoyllysine (Lys65).

It belongs to the GcvH family. As to quaternary structure, the glycine cleavage system is composed of four proteins: P, T, L and H. (R)-lipoate serves as cofactor.

Its function is as follows. The glycine cleavage system catalyzes the degradation of glycine. The H protein shuttles the methylamine group of glycine from the P protein to the T protein. This Shewanella sp. (strain MR-7) protein is Glycine cleavage system H protein.